The chain runs to 129 residues: Small ribosomal subunit protein uS11 (129 aa).

This sequence belongs to the universal ribosomal protein uS11 family. Part of the 30S ribosomal subunit. Interacts with proteins S7 and S18. Binds to IF-3.

In terms of biological role, located on the platform of the 30S subunit, it bridges several disparate RNA helices of the 16S rRNA. Forms part of the Shine-Dalgarno cleft in the 70S ribosome. This is Small ribosomal subunit protein uS11 from Aromatoleum aromaticum (strain DSM 19018 / LMG 30748 / EbN1) (Azoarcus sp. (strain EbN1)).